A 272-amino-acid polypeptide reads, in one-letter code: Cell division protein FtsQ (272 aa).

Topologically, residues 1 to 20 (MSSYAPREIPLDIRLMQGTS) are cytoplasmic. A helical transmembrane segment spans residues 21-40 (RALFWLVALGCLFVAGHWLM). Over 41 to 272 (QRNWWDIRAV…KTPQPAGRKD (232 aa)) the chain is Periplasmic. Residues 45–114 (WDIRAVRLQG…MQLAVTLQAQ (70 aa)) form the POTRA domain.

Belongs to the FtsQ/DivIB family. FtsQ subfamily. As to quaternary structure, part of a complex composed of FtsB, FtsL and FtsQ.

It is found in the cell inner membrane. In terms of biological role, essential cell division protein. May link together the upstream cell division proteins, which are predominantly cytoplasmic, with the downstream cell division proteins, which are predominantly periplasmic. May control correct divisome assembly. The sequence is that of Cell division protein FtsQ from Thiomonas arsenitoxydans (strain DSM 22701 / CIP 110005 / 3As).